The sequence spans 352 residues: Protein RecA (352 aa).

An ATP-binding site is contributed by 67 to 74 (GPESSGKT).

Belongs to the RecA family.

The protein localises to the cytoplasm. Can catalyze the hydrolysis of ATP in the presence of single-stranded DNA, the ATP-dependent uptake of single-stranded DNA by duplex DNA, and the ATP-dependent hybridization of homologous single-stranded DNAs. It interacts with LexA causing its activation and leading to its autocatalytic cleavage. The protein is Protein RecA of Chlamydia trachomatis serovar A (strain ATCC VR-571B / DSM 19440 / HAR-13).